The chain runs to 520 residues: GMP synthase [glutamine-hydrolyzing] (520 aa).

The 193-residue stretch at 13 to 205 folds into the Glutamine amidotransferase type-1 domain; it reads KIIVLDYGSQ…ALNICKAKGD (193 aa). C90 serves as the catalytic Nucleophile. Catalysis depends on residues H179 and E181. One can recognise a GMPS ATP-PPase domain in the interval 206 to 395; sequence WSMDNFIDMQ…LGMPDHIVWR (190 aa). Residue 233-239 coordinates ATP; the sequence is SGGVDSS.

As to quaternary structure, homodimer.

The enzyme catalyses XMP + L-glutamine + ATP + H2O = GMP + L-glutamate + AMP + diphosphate + 2 H(+). It functions in the pathway purine metabolism; GMP biosynthesis; GMP from XMP (L-Gln route): step 1/1. Catalyzes the synthesis of GMP from XMP. The protein is GMP synthase [glutamine-hydrolyzing] of Streptococcus pneumoniae (strain CGSP14).